The primary structure comprises 344 residues: Adenosine deaminase (344 aa).

The Zn(2+) site is built by His-14 and His-16. Residues His-16, Asp-18, and Gly-177 each contribute to the substrate site. Residue His-204 participates in Zn(2+) binding. The active-site Proton donor is Glu-207. Zn(2+) is bound at residue Asp-284.

It belongs to the metallo-dependent hydrolases superfamily. Adenosine and AMP deaminases family. Adenosine deaminase subfamily. Zn(2+) serves as cofactor.

It carries out the reaction adenosine + H2O + H(+) = inosine + NH4(+). The catalysed reaction is 2'-deoxyadenosine + H2O + H(+) = 2'-deoxyinosine + NH4(+). In terms of biological role, catalyzes the hydrolytic deamination of adenosine and 2-deoxyadenosine. The protein is Adenosine deaminase of Haemophilus ducreyi (strain 35000HP / ATCC 700724).